The following is a 443-amino-acid chain: Eukaryotic translation initiation factor 3 subunit M (443 aa).

A PCI domain is found at 205–375; sequence GLYQSTGNLA…SLIRIHSISS (171 aa). A disordered region spans residues 413–443; that stretch reads ETVAQQGLGQQRRGGKRREEKKEKEDKEEQE. Over residues 429–443 the composition is skewed to basic and acidic residues; that stretch reads RREEKKEKEDKEEQE.

Belongs to the eIF-3 subunit M family. Component of the eukaryotic translation initiation factor 3 (eIF-3) complex.

It localises to the cytoplasm. In terms of biological role, component of the eukaryotic translation initiation factor 3 (eIF-3) complex, which is involved in protein synthesis of a specialized repertoire of mRNAs and, together with other initiation factors, stimulates binding of mRNA and methionyl-tRNAi to the 40S ribosome. The eIF-3 complex specifically targets and initiates translation of a subset of mRNAs involved in cell proliferation. This is Eukaryotic translation initiation factor 3 subunit M from Cryptococcus neoformans var. neoformans serotype D (strain B-3501A) (Filobasidiella neoformans).